Here is a 295-residue protein sequence, read N- to C-terminus: uncharacterized protein (295 aa).

Positions 1 to 13 are enriched in basic residues; it reads MRHSVARPTRLPR. Disordered stretches follow at residues 1 to 111 and 183 to 295; these read MRHS…AGLS and TSAF…PRDS. The span at 57-67 shows a compositional bias: low complexity; sequence AGPSAGAAARP. Over residues 68–77 the composition is skewed to pro residues; that stretch reads AAPPPQPREP. Basic and acidic residues-rich tracts occupy residues 245–257 and 280–295; these read LRPK…DRRP and GEPH…PRDS.

This is an uncharacterized protein from Homo sapiens (Human).